Here is a 374-residue protein sequence, read N- to C-terminus: tRNA-specific 2-thiouridylase MnmA (374 aa).

ATP contacts are provided by residues 16 to 23 (GMSGGVDS) and Met-42. The segment at 102–104 (NPD) is interaction with target base in tRNA. The active-site Nucleophile is the Cys-107. Cysteines 107 and 203 form a disulfide. Gly-131 serves as a coordination point for ATP. Residues 153 to 155 (KDQ) are interaction with tRNA. Cys-203 functions as the Cysteine persulfide intermediate in the catalytic mechanism. Residues 311-312 (RY) form an interaction with tRNA region.

Belongs to the MnmA/TRMU family.

It is found in the cytoplasm. The enzyme catalyses S-sulfanyl-L-cysteinyl-[protein] + uridine(34) in tRNA + AH2 + ATP = 2-thiouridine(34) in tRNA + L-cysteinyl-[protein] + A + AMP + diphosphate + H(+). In terms of biological role, catalyzes the 2-thiolation of uridine at the wobble position (U34) of tRNA, leading to the formation of s(2)U34. The chain is tRNA-specific 2-thiouridylase MnmA from Exiguobacterium sibiricum (strain DSM 17290 / CCUG 55495 / CIP 109462 / JCM 13490 / 255-15).